The sequence spans 248 residues: Aspartate/glutamate leucyltransferase (248 aa).

It belongs to the R-transferase family. Bpt subfamily.

It is found in the cytoplasm. It carries out the reaction N-terminal L-glutamyl-[protein] + L-leucyl-tRNA(Leu) = N-terminal L-leucyl-L-glutamyl-[protein] + tRNA(Leu) + H(+). The enzyme catalyses N-terminal L-aspartyl-[protein] + L-leucyl-tRNA(Leu) = N-terminal L-leucyl-L-aspartyl-[protein] + tRNA(Leu) + H(+). Functionally, functions in the N-end rule pathway of protein degradation where it conjugates Leu from its aminoacyl-tRNA to the N-termini of proteins containing an N-terminal aspartate or glutamate. This chain is Aspartate/glutamate leucyltransferase, found in Methylobacterium sp. (strain 4-46).